Reading from the N-terminus, the 117-residue chain is Putative iron-sulfur cluster insertion protein ErpA (117 aa).

Iron-sulfur cluster is bound by residues cysteine 45, cysteine 109, and cysteine 111.

It belongs to the HesB/IscA family. Homodimer. Iron-sulfur cluster is required as a cofactor.

Functionally, required for insertion of 4Fe-4S clusters. This chain is Putative iron-sulfur cluster insertion protein ErpA, found in Chromobacterium violaceum (strain ATCC 12472 / DSM 30191 / JCM 1249 / CCUG 213 / NBRC 12614 / NCIMB 9131 / NCTC 9757 / MK).